The chain runs to 506 residues: Maturase K (506 aa).

The protein belongs to the intron maturase 2 family. MatK subfamily.

It is found in the plastid. The protein resides in the chloroplast. Functionally, usually encoded in the trnK tRNA gene intron. Probably assists in splicing its own and other chloroplast group II introns. This chain is Maturase K, found in Arabis alpina (Alpine rock-cress).